The sequence spans 155 residues: Ribosome maturation factor RimP (155 aa).

This sequence belongs to the RimP family.

It is found in the cytoplasm. Functionally, required for maturation of 30S ribosomal subunits. In Staphylococcus saprophyticus subsp. saprophyticus (strain ATCC 15305 / DSM 20229 / NCIMB 8711 / NCTC 7292 / S-41), this protein is Ribosome maturation factor RimP.